A 1198-amino-acid chain; its full sequence is Sterol 3-beta-glucosyltransferase (1198 aa).

Residues 1–11 (MPITQIISASD) are compositionally biased toward polar residues. Disordered regions lie at residues 1–89 (MPIT…DNAD) and 124–162 (SQVD…PEVP). Positions 35 to 51 (RHHRLSRSLSKFKRWRG) are enriched in basic residues. Residues 52–67 (RSNSSLSMGSSEQQEL) show a composition bias toward low complexity. A Phosphoserine modification is found at Ser-76. Residues 146–162 (VKSKKENLKTKSHPEVP) show a composition bias toward basic and acidic residues. In terms of domain architecture, GRAM 1 spans 187–236 (AKLRQRFCLDEQEPFLNDFPAWLLKDVLVQGHIFITTKHFLFFAYLPKNP). Positions 238–336 (SVKMSGNLNI…WVNALKKEQF (99 aa)) constitute a PH domain. Positions 427–465 (KSSFGKETPATAEQKNNGEDSKYLNVPTSAVPSSENGKK) are disordered. Over residues 452–461 (VPTSAVPSSE) the composition is skewed to polar residues. Residues 570-636 (ERFRYHFKFN…VDVETCYKEK (67 aa)) form the GRAM 2 domain. A Phosphoserine modification is found at Ser-693. Residues Ser-749, Arg-750, Asp-752, Asn-1025, Asn-1053, Val-1054, His-1056, His-1069, Ser-1072, Gly-1073, Thr-1074, Asp-1093, and Gln-1094 each coordinate UDP-alpha-D-glucose.

This sequence belongs to the glycosyltransferase 28 family.

Its subcellular location is the cytoplasm. It is found in the membrane. The catalysed reaction is a sterol + UDP-alpha-D-glucose = a sterol 3-beta-D-glucoside + UDP + H(+). The enzyme catalyses ergosterol + UDP-alpha-D-glucose = ergosteryl 3-beta-D-glucoside + UDP + H(+). In terms of biological role, sterol glycosyltransferase responsible for the glycosylation of ergosterol to form ergosterol-glucoside. Also shows activity in vitro on other sterols such as cholesterol, beta-sitosterol, stigmasterol and tomatidine. In contrasts to what is observed in Pichia pastoris and Aspergillus oryzae, is not involved in cytoplasm to vacuole transport (Cvt), pexophagy or nonselective autophagy in Saccharomyces cerevisiae. This chain is Sterol 3-beta-glucosyltransferase, found in Saccharomyces cerevisiae (strain YJM789) (Baker's yeast).